The chain runs to 512 residues: ATP synthase subunit alpha (512 aa).

169–176 lines the ATP pocket; it reads GDRQTGKT.

It belongs to the ATPase alpha/beta chains family. F-type ATPases have 2 components, CF(1) - the catalytic core - and CF(0) - the membrane proton channel. CF(1) has five subunits: alpha(3), beta(3), gamma(1), delta(1), epsilon(1). CF(0) has three main subunits: a(1), b(2) and c(9-12). The alpha and beta chains form an alternating ring which encloses part of the gamma chain. CF(1) is attached to CF(0) by a central stalk formed by the gamma and epsilon chains, while a peripheral stalk is formed by the delta and b chains.

The protein resides in the cell membrane. It catalyses the reaction ATP + H2O + 4 H(+)(in) = ADP + phosphate + 5 H(+)(out). Functionally, produces ATP from ADP in the presence of a proton gradient across the membrane. The alpha chain is a regulatory subunit. This is ATP synthase subunit alpha from Buchnera aphidicola subsp. Acyrthosiphon pisum (strain 5A).